The chain runs to 130 residues: Small ribosomal subunit protein uS11 (130 aa).

This sequence belongs to the universal ribosomal protein uS11 family. In terms of assembly, part of the 30S ribosomal subunit. Interacts with proteins S7 and S18. Binds to IF-3.

Located on the platform of the 30S subunit, it bridges several disparate RNA helices of the 16S rRNA. Forms part of the Shine-Dalgarno cleft in the 70S ribosome. The protein is Small ribosomal subunit protein uS11 of Nautilia profundicola (strain ATCC BAA-1463 / DSM 18972 / AmH).